The following is a 287-amino-acid chain: Pyridoxal kinase PdxY (287 aa).

Substrate contacts are provided by residues Ser9 and 44–45 (TQ). 3 residues coordinate ATP: Asp111, Glu147, and Lys180. Asp221 lines the substrate pocket.

This sequence belongs to the pyridoxine kinase family. PdxY subfamily. As to quaternary structure, homodimer. Mg(2+) is required as a cofactor.

It carries out the reaction pyridoxal + ATP = pyridoxal 5'-phosphate + ADP + H(+). Its pathway is cofactor metabolism; pyridoxal 5'-phosphate salvage; pyridoxal 5'-phosphate from pyridoxal: step 1/1. Its function is as follows. Pyridoxal kinase involved in the salvage pathway of pyridoxal 5'-phosphate (PLP). Catalyzes the phosphorylation of pyridoxal to PLP. This Paraburkholderia phymatum (strain DSM 17167 / CIP 108236 / LMG 21445 / STM815) (Burkholderia phymatum) protein is Pyridoxal kinase PdxY.